The chain runs to 157 residues: Protein Smg homolog (157 aa).

This sequence belongs to the Smg family.

In Photobacterium profundum (strain SS9), this protein is Protein Smg homolog.